We begin with the raw amino-acid sequence, 158 residues long: 6,7-dimethyl-8-ribityllumazine synthase (158 aa).

Residues F22, 57–59 (AYE), and 84–86 (TVI) each bind 5-amino-6-(D-ribitylamino)uracil. (2S)-2-hydroxy-3-oxobutyl phosphate is bound at residue 89 to 90 (GT). The active-site Proton donor is H92. F117 provides a ligand contact to 5-amino-6-(D-ribitylamino)uracil. R131 is a (2S)-2-hydroxy-3-oxobutyl phosphate binding site.

Belongs to the DMRL synthase family. In terms of assembly, forms an icosahedral capsid composed of 60 subunits, arranged as a dodecamer of pentamers.

It catalyses the reaction (2S)-2-hydroxy-3-oxobutyl phosphate + 5-amino-6-(D-ribitylamino)uracil = 6,7-dimethyl-8-(1-D-ribityl)lumazine + phosphate + 2 H2O + H(+). It participates in cofactor biosynthesis; riboflavin biosynthesis; riboflavin from 2-hydroxy-3-oxobutyl phosphate and 5-amino-6-(D-ribitylamino)uracil: step 1/2. Its function is as follows. Catalyzes the formation of 6,7-dimethyl-8-ribityllumazine by condensation of 5-amino-6-(D-ribitylamino)uracil with 3,4-dihydroxy-2-butanone 4-phosphate. This is the penultimate step in the biosynthesis of riboflavin. The chain is 6,7-dimethyl-8-ribityllumazine synthase from Pectobacterium carotovorum subsp. carotovorum (strain PC1).